The primary structure comprises 40 residues: Natriuretic peptide PpNP-a (40 aa).

A propeptide spanning residues 1–8 (SGSKTANI) is cleaved from the precursor. Residues 1-40 (SGSKTANIGDGCFGVPIDHIGSTSGMGCGSPRPKPTPGGS) are disordered. A disulfide bond links cysteine 12 and cysteine 28.

Belongs to the natriuretic peptide family. As to expression, expressed by the venom gland.

The protein localises to the secreted. Its function is as follows. Snake venom natriuretic peptide that targets both NPR1 and NPR2. Exhibits hypotensive and vasodepressor activities. This chain is Natriuretic peptide PpNP-a, found in Pseudechis porphyriacus (Red-bellied black snake).